Reading from the N-terminus, the 177-residue chain is Crossover junction endodeoxyribonuclease RuvC (177 aa).

Active-site residues include D7, E68, and D141. Residues D7, E68, and D141 each coordinate Mg(2+).

It belongs to the RuvC family. As to quaternary structure, homodimer which binds Holliday junction (HJ) DNA. The HJ becomes 2-fold symmetrical on binding to RuvC with unstacked arms; it has a different conformation from HJ DNA in complex with RuvA. In the full resolvosome a probable DNA-RuvA(4)-RuvB(12)-RuvC(2) complex forms which resolves the HJ. Mg(2+) is required as a cofactor.

It is found in the cytoplasm. The enzyme catalyses Endonucleolytic cleavage at a junction such as a reciprocal single-stranded crossover between two homologous DNA duplexes (Holliday junction).. Its function is as follows. The RuvA-RuvB-RuvC complex processes Holliday junction (HJ) DNA during genetic recombination and DNA repair. Endonuclease that resolves HJ intermediates. Cleaves cruciform DNA by making single-stranded nicks across the HJ at symmetrical positions within the homologous arms, yielding a 5'-phosphate and a 3'-hydroxyl group; requires a central core of homology in the junction. The consensus cleavage sequence is 5'-(A/T)TT(C/G)-3'. Cleavage occurs on the 3'-side of the TT dinucleotide at the point of strand exchange. HJ branch migration catalyzed by RuvA-RuvB allows RuvC to scan DNA until it finds its consensus sequence, where it cleaves and resolves the cruciform DNA. In Nocardioides sp. (strain ATCC BAA-499 / JS614), this protein is Crossover junction endodeoxyribonuclease RuvC.